A 31-amino-acid polypeptide reads, in one-letter code: Cytochrome b6-f complex subunit 6 (31 aa).

A helical membrane pass occupies residues 4–24 (VIAYLGLLASVLIGTIVIYLG).

It belongs to the PetL family. The 4 large subunits of the cytochrome b6-f complex are cytochrome b6, subunit IV (17 kDa polypeptide, PetD), cytochrome f and the Rieske protein, while the 4 small subunits are PetG, PetL, PetM and PetN. The complex functions as a dimer.

It localises to the plastid. It is found in the chloroplast thylakoid membrane. In terms of biological role, component of the cytochrome b6-f complex, which mediates electron transfer between photosystem II (PSII) and photosystem I (PSI), cyclic electron flow around PSI, and state transitions. PetL is important for photoautotrophic growth as well as for electron transfer efficiency and stability of the cytochrome b6-f complex. The polypeptide is Cytochrome b6-f complex subunit 6 (Oltmannsiellopsis viridis (Marine flagellate)).